A 255-amino-acid polypeptide reads, in one-letter code: Indole-3-glycerol phosphate synthase (255 aa).

This sequence belongs to the TrpC family.

It catalyses the reaction 1-(2-carboxyphenylamino)-1-deoxy-D-ribulose 5-phosphate + H(+) = (1S,2R)-1-C-(indol-3-yl)glycerol 3-phosphate + CO2 + H2O. It functions in the pathway amino-acid biosynthesis; L-tryptophan biosynthesis; L-tryptophan from chorismate: step 4/5. The polypeptide is Indole-3-glycerol phosphate synthase (Streptococcus gordonii (strain Challis / ATCC 35105 / BCRC 15272 / CH1 / DL1 / V288)).